We begin with the raw amino-acid sequence, 35 residues long: UPF0387 membrane protein YohO (35 aa).

Residues Ile-6 to Ala-26 form a helical membrane-spanning segment.

It belongs to the UPF0387 family.

The protein localises to the cell inner membrane. The polypeptide is UPF0387 membrane protein YohO (Escherichia coli O8 (strain IAI1)).